A 515-amino-acid polypeptide reads, in one-letter code: 2-isopropylmalate synthase (515 aa).

The Pyruvate carboxyltransferase domain occupies I4 to K266. Mn(2+)-binding residues include D13, H201, H203, and N237. A regulatory domain region spans residues Q391 to P515.

Belongs to the alpha-IPM synthase/homocitrate synthase family. LeuA type 1 subfamily. In terms of assembly, homodimer. The cofactor is Mn(2+).

Its subcellular location is the cytoplasm. The enzyme catalyses 3-methyl-2-oxobutanoate + acetyl-CoA + H2O = (2S)-2-isopropylmalate + CoA + H(+). It participates in amino-acid biosynthesis; L-leucine biosynthesis; L-leucine from 3-methyl-2-oxobutanoate: step 1/4. Functionally, catalyzes the condensation of the acetyl group of acetyl-CoA with 3-methyl-2-oxobutanoate (2-ketoisovalerate) to form 3-carboxy-3-hydroxy-4-methylpentanoate (2-isopropylmalate). The chain is 2-isopropylmalate synthase from Geobacillus thermodenitrificans (strain NG80-2).